We begin with the raw amino-acid sequence, 506 residues long: D-alanine--D-alanyl carrier protein ligase (506 aa).

Residue 152-153 (TS) participates in ATP binding. Residue Asp197 coordinates D-alanine. 292–297 (NTYGPT) contacts ATP. Val301 provides a ligand contact to D-alanine. ATP-binding positions include Asp383, 395–398 (YRGR), and Lys494. Lys494 is a D-alanine binding site.

It belongs to the ATP-dependent AMP-binding enzyme family. DltA subfamily.

The protein resides in the cytoplasm. It catalyses the reaction holo-[D-alanyl-carrier protein] + D-alanine + ATP = D-alanyl-[D-alanyl-carrier protein] + AMP + diphosphate. The protein operates within cell wall biogenesis; lipoteichoic acid biosynthesis. Its function is as follows. Catalyzes the first step in the D-alanylation of lipoteichoic acid (LTA), the activation of D-alanine and its transfer onto the D-alanyl carrier protein (Dcp) DltC. In an ATP-dependent two-step reaction, forms a high energy D-alanyl-AMP intermediate, followed by transfer of the D-alanyl residue as a thiol ester to the phosphopantheinyl prosthetic group of the Dcp. D-alanylation of LTA plays an important role in modulating the properties of the cell wall in Gram-positive bacteria, influencing the net charge of the cell wall. This Lacticaseibacillus casei (strain BL23) (Lactobacillus casei) protein is D-alanine--D-alanyl carrier protein ligase.